A 350-amino-acid polypeptide reads, in one-letter code: Probable peptidyl-alpha-hydroxyglycine alpha-amidating lyase pgal-1 (350 aa).

The signal sequence occupies residues 1 to 19; sequence MRASTACLVALLAPFYISA. Residues 46–90 form an NHL 1 repeat; that stretch reads DRELIGLFNPSKEIGQVSGLAVNKNGHIVAFHRSGRVWDEKSFND. Asn-103 carries N-linked (GlcNAc...) asparagine glycosylation. NHL repeat units follow at residues 113 to 154, 162 to 206, and 212 to 256; these read KKVI…IDAK, LGEK…FDAK, and QINA…FSAG. Cystine bridges form between Cys-176–Cys-196 and Cys-241–Cys-252.

Belongs to the peptidyl-alpha-hydroxyglycine alpha-amidating lyase family. The cofactor is Zn(2+).

The protein resides in the secreted. The catalysed reaction is a [peptide]-C-terminal (2S)-2-hydroxyglycine = a [peptide]-C-terminal amide + glyoxylate. In terms of biological role, probable lyase that catalyzes an essential reaction in C-terminal alpha-amidation of peptides. Mediates the dismutation of the unstable peptidyl(2-hydroxyglycine) intermediate to glyoxylate and the corresponding desglycine peptide amide. C-terminal amidation of peptides such as neuropeptides is essential for full biological activity. This Caenorhabditis elegans protein is Probable peptidyl-alpha-hydroxyglycine alpha-amidating lyase pgal-1.